Reading from the N-terminus, the 121-residue chain is Small ribosomal subunit protein uS13 (121 aa).

A disordered region spans residues 91-121 (HRMSLPVRGQRTRTNARTRRGSRKTVAGRKK). Over residues 100–121 (QRTRTNARTRRGSRKTVAGRKK) the composition is skewed to basic residues.

Belongs to the universal ribosomal protein uS13 family. As to quaternary structure, part of the 30S ribosomal subunit. Forms a loose heterodimer with protein S19. Forms two bridges to the 50S subunit in the 70S ribosome.

Located at the top of the head of the 30S subunit, it contacts several helices of the 16S rRNA. In the 70S ribosome it contacts the 23S rRNA (bridge B1a) and protein L5 of the 50S subunit (bridge B1b), connecting the 2 subunits; these bridges are implicated in subunit movement. Contacts the tRNAs in the A and P-sites. In Prochlorococcus marinus (strain MIT 9301), this protein is Small ribosomal subunit protein uS13.